Consider the following 210-residue polypeptide: Thymidylate kinase (210 aa).

Residue 10–17 (GPEGAGKS) participates in ATP binding.

Belongs to the thymidylate kinase family.

It catalyses the reaction dTMP + ATP = dTDP + ADP. In terms of biological role, phosphorylation of dTMP to form dTDP in both de novo and salvage pathways of dTTP synthesis. This is Thymidylate kinase from Pseudomonas syringae pv. syringae (strain B728a).